Reading from the N-terminus, the 89-residue chain is Small ribosomal subunit protein bS20 (89 aa).

The tract at residues 1–28 is disordered; that stretch reads MTLANIKSAKKRAVQSEKRRQHNASQRS.

The protein belongs to the bacterial ribosomal protein bS20 family.

In terms of biological role, binds directly to 16S ribosomal RNA. This is Small ribosomal subunit protein bS20 from Haemophilus ducreyi (strain 35000HP / ATCC 700724).